The chain runs to 30 residues: Nattererin-1 (30 aa).

Expressed by the skin glands.

It localises to the secreted. Its function is as follows. Probably has antibacterial activity. The sequence is that of Nattererin-1 from Physalaemus nattereri (Cuyaba dwarf frog).